The following is a 40-amino-acid chain: Bomanin Short 6 (40 aa).

The signal sequence occupies residues 1 to 18 (MKLLSITFLFGLLALASA). Positions 19–23 (NPLSP) are cleaved as a propeptide — removed by a dipeptidylpeptidase. Cysteine 32 and cysteine 35 are joined by a disulfide.

Belongs to the bomanin family.

It is found in the secreted. Secreted immune-induced peptide induced by Toll signaling. Has a role in resistance to bacterial and fungal infections. The strength of antimicrobial activity appears to correlate with the overall level of expression. The polypeptide is Bomanin Short 6 (Drosophila melanogaster (Fruit fly)).